Here is a 195-residue protein sequence, read N- to C-terminus: Dehydrin DHN1 (195 aa).

The segment at 1–195 (MAEYGDQYGR…IKEKLPGGHH (195 aa)) is disordered. Residues 37–48 (YGTTGTTVGYGT) are compositionally biased toward low complexity. Positions 50 to 64 (QCVTTVTTGAQKTDQ) are enriched in polar residues. The span at 65-88 (YGTPGTTGAYGTDQYGTTGTTGEY) shows a compositional bias: low complexity. 2 stretches are compositionally biased toward basic and acidic residues: residues 136-153 (KEKI…DDQT) and 173-195 (SPEH…GGHH).

The protein belongs to the plant dehydrin family. Phosphorylated in vitro by CK2. As to expression, expressed in roots and leaves.

The protein resides in the cytoplasm. It localises to the nucleus. This chain is Dehydrin DHN1, found in Avicennia marina (Grey mangrove).